The primary structure comprises 291 residues: Pantothenate synthetase (291 aa).

ATP is bound at residue 33–40 (MGALHEGH). His-40 (proton donor) is an active-site residue. Gln-64 is a (R)-pantoate binding site. Gln-64 provides a ligand contact to beta-alanine. An ATP-binding site is contributed by 157 to 160 (GEKD). Gln-163 is a (R)-pantoate binding site. ATP-binding positions include Val-186 and 194–197 (LSSR).

Belongs to the pantothenate synthetase family. As to quaternary structure, homodimer.

It localises to the cytoplasm. It catalyses the reaction (R)-pantoate + beta-alanine + ATP = (R)-pantothenate + AMP + diphosphate + H(+). It functions in the pathway cofactor biosynthesis; (R)-pantothenate biosynthesis; (R)-pantothenate from (R)-pantoate and beta-alanine: step 1/1. Its function is as follows. Catalyzes the condensation of pantoate with beta-alanine in an ATP-dependent reaction via a pantoyl-adenylate intermediate. In Rubrobacter xylanophilus (strain DSM 9941 / JCM 11954 / NBRC 16129 / PRD-1), this protein is Pantothenate synthetase.